We begin with the raw amino-acid sequence, 631 residues long: Phosphomethylpyrimidine synthase (631 aa).

Residues N239, M268, Y297, H333, 353-355 (SRG), 394-397 (DGLR), and E433 each bind substrate. H437 is a binding site for Zn(2+). Position 460 (Y460) interacts with substrate. A Zn(2+)-binding site is contributed by H501. Residues C581, C584, and C589 each coordinate [4Fe-4S] cluster.

It belongs to the ThiC family. In terms of assembly, homodimer. It depends on [4Fe-4S] cluster as a cofactor.

The enzyme catalyses 5-amino-1-(5-phospho-beta-D-ribosyl)imidazole + S-adenosyl-L-methionine = 4-amino-2-methyl-5-(phosphooxymethyl)pyrimidine + CO + 5'-deoxyadenosine + formate + L-methionine + 3 H(+). It participates in cofactor biosynthesis; thiamine diphosphate biosynthesis. In terms of biological role, catalyzes the synthesis of the hydroxymethylpyrimidine phosphate (HMP-P) moiety of thiamine from aminoimidazole ribotide (AIR) in a radical S-adenosyl-L-methionine (SAM)-dependent reaction. The chain is Phosphomethylpyrimidine synthase from Escherichia coli O6:H1 (strain CFT073 / ATCC 700928 / UPEC).